We begin with the raw amino-acid sequence, 242 residues long: Anthranilate phosphoribosyltransferase (242 aa).

5-phospho-alpha-D-ribose 1-diphosphate-binding positions include G79, 82 to 83 (GD), T87, 89 to 92 (NVST), 107 to 115 (KHGNRAVSS), and S119. G79 serves as a coordination point for anthranilate. S91 is a Mg(2+) binding site. Position 110 (N110) interacts with anthranilate. Residue R165 participates in anthranilate binding. Positions 224 and 225 each coordinate Mg(2+).

This sequence belongs to the anthranilate phosphoribosyltransferase family. As to quaternary structure, homodimer. Requires Mg(2+) as cofactor.

The catalysed reaction is N-(5-phospho-beta-D-ribosyl)anthranilate + diphosphate = 5-phospho-alpha-D-ribose 1-diphosphate + anthranilate. Its pathway is amino-acid biosynthesis; L-tryptophan biosynthesis; L-tryptophan from chorismate: step 2/5. Functionally, catalyzes the transfer of the phosphoribosyl group of 5-phosphorylribose-1-pyrophosphate (PRPP) to anthranilate to yield N-(5'-phosphoribosyl)-anthranilate (PRA). This Bacillus caldotenax protein is Anthranilate phosphoribosyltransferase (trpD).